The sequence spans 306 residues: UDP-3-O-acyl-N-acetylglucosamine deacetylase (306 aa).

Positions 79, 238, and 242 each coordinate Zn(2+). His265 acts as the Proton donor in catalysis.

This sequence belongs to the LpxC family. Zn(2+) is required as a cofactor.

It carries out the reaction a UDP-3-O-[(3R)-3-hydroxyacyl]-N-acetyl-alpha-D-glucosamine + H2O = a UDP-3-O-[(3R)-3-hydroxyacyl]-alpha-D-glucosamine + acetate. Its pathway is glycolipid biosynthesis; lipid IV(A) biosynthesis; lipid IV(A) from (3R)-3-hydroxytetradecanoyl-[acyl-carrier-protein] and UDP-N-acetyl-alpha-D-glucosamine: step 2/6. Its function is as follows. Catalyzes the hydrolysis of UDP-3-O-myristoyl-N-acetylglucosamine to form UDP-3-O-myristoylglucosamine and acetate, the committed step in lipid A biosynthesis. The chain is UDP-3-O-acyl-N-acetylglucosamine deacetylase from Yersinia pseudotuberculosis serotype O:1b (strain IP 31758).